Consider the following 603-residue polypeptide: UvrABC system protein C (603 aa).

Residues 13–92 (NGPGVYLMKD…IRKHKPRYNI (80 aa)) enclose the GIY-YIG domain. The UVR domain maps to 202–237 (NDLLQKIKEQMAAASERQEYELAARLRDRMFAIQAT).

The protein belongs to the UvrC family. Interacts with UvrB in an incision complex.

The protein localises to the cytoplasm. In terms of biological role, the UvrABC repair system catalyzes the recognition and processing of DNA lesions. UvrC both incises the 5' and 3' sides of the lesion. The N-terminal half is responsible for the 3' incision and the C-terminal half is responsible for the 5' incision. This chain is UvrABC system protein C, found in Desulfatibacillum aliphaticivorans.